The sequence spans 164 residues: S-ribosylhomocysteine lyase (164 aa).

Fe cation is bound by residues H61, H65, and C131.

This sequence belongs to the LuxS family. In terms of assembly, homodimer. The cofactor is Fe cation.

The enzyme catalyses S-(5-deoxy-D-ribos-5-yl)-L-homocysteine = (S)-4,5-dihydroxypentane-2,3-dione + L-homocysteine. Its function is as follows. Involved in the synthesis of autoinducer 2 (AI-2) which is secreted by bacteria and is used to communicate both the cell density and the metabolic potential of the environment. The regulation of gene expression in response to changes in cell density is called quorum sensing. Catalyzes the transformation of S-ribosylhomocysteine (RHC) to homocysteine (HC) and 4,5-dihydroxy-2,3-pentadione (DPD). This Bifidobacterium longum (strain NCC 2705) protein is S-ribosylhomocysteine lyase.